Consider the following 209-residue polypeptide: Prolactin (209 aa).

Residues 1–24 (MAQRFKGSNLFLTALLCLASQGHA) form the signal peptide. Cystine bridges form between cysteine 70-cysteine 184 and cysteine 201-cysteine 209.

This sequence belongs to the somatotropin/prolactin family.

The protein localises to the secreted. The protein is Prolactin (prl) of Anguilla japonica (Japanese eel).